A 226-amino-acid polypeptide reads, in one-letter code: 7-cyano-7-deazaguanine synthase (226 aa).

Phenylalanine 10–alanine 20 contributes to the ATP binding site. Zn(2+) contacts are provided by cysteine 190, cysteine 205, cysteine 208, and cysteine 211.

The protein belongs to the QueC family. Zn(2+) serves as cofactor.

The catalysed reaction is 7-carboxy-7-deazaguanine + NH4(+) + ATP = 7-cyano-7-deazaguanine + ADP + phosphate + H2O + H(+). The protein operates within purine metabolism; 7-cyano-7-deazaguanine biosynthesis. In terms of biological role, catalyzes the ATP-dependent conversion of 7-carboxy-7-deazaguanine (CDG) to 7-cyano-7-deazaguanine (preQ(0)). The sequence is that of 7-cyano-7-deazaguanine synthase from Helicobacter pylori (strain Shi470).